The following is a 218-amino-acid chain: uncharacterized protein (218 aa).

The segment at 1–67 (MARITNMGKR…KKKRSEYRRL (67 aa)) is disordered. The segment covering 29–39 (NSSNTNEESSS) has biased composition (low complexity). Residues 40–49 (QDNMKASFGS) show a composition bias toward polar residues. The span at 58–67 (KKKRSEYRRL) shows a compositional bias: basic residues. CCHC-type zinc fingers lie at residues 77–94 (KFCFACRQQGHIVQDCPE), 100–117 (SICFRCGSKEHSLNACSK), and 124–141 (AKCFICHENGHLSGQCEQ). The CCHC-type 4; atypical zinc finger occupies 152–168 (CCKFCSSVHHLAKDCDQ).

This is an uncharacterized protein from Schizosaccharomyces pombe (strain 972 / ATCC 24843) (Fission yeast).